We begin with the raw amino-acid sequence, 281 residues long: tRNA dimethylallyltransferase (281 aa).

2 interaction with substrate tRNA regions span residues 13 to 16 (DSAQ) and 133 to 137 (QRITR).

Belongs to the IPP transferase family. Monomer. Mg(2+) is required as a cofactor.

It catalyses the reaction adenosine(37) in tRNA + dimethylallyl diphosphate = N(6)-dimethylallyladenosine(37) in tRNA + diphosphate. In terms of biological role, catalyzes the transfer of a dimethylallyl group onto the adenine at position 37 in tRNAs that read codons beginning with uridine, leading to the formation of N6-(dimethylallyl)adenosine (i(6)A). The protein is tRNA dimethylallyltransferase of Novosphingobium aromaticivorans (strain ATCC 700278 / DSM 12444 / CCUG 56034 / CIP 105152 / NBRC 16084 / F199).